The following is a 513-amino-acid chain: Zinc finger CCCH-type with G patch domain-containing protein (513 aa).

The C3H1-type zinc finger occupies 155-178; the sequence is PCSYYLEGECRFDEAKCRFSHGAL. Composition is skewed to acidic residues over residues 252-261 and 273-283; these read DQDEDDELSS and SDEAESDMDDL. A disordered region spans residues 252–283; the sequence is DQDEDDELSSEESTSSMRDASSDEAESDMDDL. Positions 312–358 constitute a G-patch domain; the sequence is TRGIGSKLMEKMGYIHGTGLGSEGRGIVTPVSAQILPQGRSLDACME. Disordered regions lie at residues 411 to 430 and 477 to 513; these read PGES…NNEL and QVQM…MFEF. A compositionally biased stretch (polar residues) spans 477-495; sequence QVQMQSHKQELATLQAQER. Basic and acidic residues predominate over residues 496–513; sequence SLSKEQQTRKSKNKMFEF.

It localises to the nucleus. Its function is as follows. Transcription repressor. The protein is Zinc finger CCCH-type with G patch domain-containing protein of Drosophila sechellia (Fruit fly).